A 150-amino-acid chain; its full sequence is Large ribosomal subunit protein bL9 (150 aa).

Belongs to the bacterial ribosomal protein bL9 family.

Binds to the 23S rRNA. The sequence is that of Large ribosomal subunit protein bL9 from Corynebacterium aurimucosum (strain ATCC 700975 / DSM 44827 / CIP 107346 / CN-1) (Corynebacterium nigricans).